We begin with the raw amino-acid sequence, 183 residues long: UPF0725 protein At4g11700 (183 aa).

This sequence belongs to the UPF0725 (EMB2204) family.

The sequence is that of UPF0725 protein At4g11700 from Arabidopsis thaliana (Mouse-ear cress).